The following is a 396-amino-acid chain: D-alanine--D-alanine ligase (396 aa).

An ATP-grasp domain is found at 141–347; it reads KMLWQAAGLP…PQDLMAQLLS (207 aa). 174 to 229 lines the ATP pocket; that stretch reads ETRLGYPLFVKPAQAGSSVGASAVQTRAPLIPAIEAAFQWDEVVLVERYVRAREIE. Positions 301, 314, and 316 each coordinate Mg(2+). A disordered region spans residues 374 to 396; the sequence is AAHDPDAQGDDWDQRDSNPLPTA.

Belongs to the D-alanine--D-alanine ligase family. Mg(2+) serves as cofactor. Mn(2+) is required as a cofactor.

It localises to the cytoplasm. It carries out the reaction 2 D-alanine + ATP = D-alanyl-D-alanine + ADP + phosphate + H(+). It functions in the pathway cell wall biogenesis; peptidoglycan biosynthesis. Cell wall formation. In Treponema pallidum (strain Nichols), this protein is D-alanine--D-alanine ligase.